Consider the following 341-residue polypeptide: Ferredoxin--NADP reductase 2 (341 aa).

Residues D42, Q50, Y55, I95, F129, D294, and S335 each contribute to the FAD site.

This sequence belongs to the ferredoxin--NADP reductase type 2 family. As to quaternary structure, homodimer. It depends on FAD as a cofactor.

It carries out the reaction 2 reduced [2Fe-2S]-[ferredoxin] + NADP(+) + H(+) = 2 oxidized [2Fe-2S]-[ferredoxin] + NADPH. This Chloroherpeton thalassium (strain ATCC 35110 / GB-78) protein is Ferredoxin--NADP reductase 2.